A 118-amino-acid polypeptide reads, in one-letter code: Urease subunit beta (118 aa).

This sequence belongs to the urease beta subunit family. In terms of assembly, heterotrimer of UreA (gamma), UreB (beta) and UreC (alpha) subunits. Three heterotrimers associate to form the active enzyme.

The protein resides in the cytoplasm. It carries out the reaction urea + 2 H2O + H(+) = hydrogencarbonate + 2 NH4(+). It participates in nitrogen metabolism; urea degradation; CO(2) and NH(3) from urea (urease route): step 1/1. In Aliivibrio fischeri (strain ATCC 700601 / ES114) (Vibrio fischeri), this protein is Urease subunit beta.